The chain runs to 193 residues: NADH-quinone oxidoreductase subunit B (193 aa).

[4Fe-4S] cluster-binding residues include cysteine 72, cysteine 73, cysteine 137, and cysteine 167.

This sequence belongs to the complex I 20 kDa subunit family. As to quaternary structure, NDH-1 is composed of 14 different subunits. Subunits NuoB, C, D, E, F, and G constitute the peripheral sector of the complex. Requires [4Fe-4S] cluster as cofactor.

It localises to the cell inner membrane. The catalysed reaction is a quinone + NADH + 5 H(+)(in) = a quinol + NAD(+) + 4 H(+)(out). NDH-1 shuttles electrons from NADH, via FMN and iron-sulfur (Fe-S) centers, to quinones in the respiratory chain. The immediate electron acceptor for the enzyme in this species is believed to be ubiquinone. Couples the redox reaction to proton translocation (for every two electrons transferred, four hydrogen ions are translocated across the cytoplasmic membrane), and thus conserves the redox energy in a proton gradient. The polypeptide is NADH-quinone oxidoreductase subunit B (Phenylobacterium zucineum (strain HLK1)).